A 106-amino-acid polypeptide reads, in one-letter code: Large ribosomal subunit protein P1A (106 aa).

The interval 74 to 106 is disordered; sequence AGGGAAAEEAAEEEKEEEAKEESDDDMGFGLFD. The span at 82 to 100 shows a compositional bias: acidic residues; that stretch reads EAAEEEKEEEAKEESDDDM.

It belongs to the eukaryotic ribosomal protein P1/P2 family. In terms of assembly, component of the large ribosomal subunit (LSU). Mature ribosomes consist of a small (40S) and a large (60S) subunit. The 40S subunit contains about 32 different proteins and 1 molecule of RNA (18S). The 60S subunit contains 45 different proteins and 3 molecules of RNA (25S, 5.8S and 5S). The 5 acidic ribosomal P-proteins form the stalk structure of the 60S subunit. They are organized as a pentameric complex in which uL10/P0 interacts with 2 heterodimers, P1A-P2B and P1B-P2A. Post-translationally, phosphorylated.

It localises to the cytoplasm. Its function is as follows. Component of the ribosome, a large ribonucleoprotein complex responsible for the synthesis of proteins in the cell. The small ribosomal subunit (SSU) binds messenger RNAs (mRNAs) and translates the encoded message by selecting cognate aminoacyl-transfer RNA (tRNA) molecules. The large subunit (LSU) contains the ribosomal catalytic site termed the peptidyl transferase center (PTC), which catalyzes the formation of peptide bonds, thereby polymerizing the amino acids delivered by tRNAs into a polypeptide chain. The nascent polypeptides leave the ribosome through a tunnel in the LSU and interact with protein factors that function in enzymatic processing, targeting, and the membrane insertion of nascent chains at the exit of the ribosomal tunnel. This is Large ribosomal subunit protein P1A (RPP1A) from Candida albicans (strain SC5314 / ATCC MYA-2876) (Yeast).